The chain runs to 236 residues: Protein CUSTOS (236 aa).

Disordered regions lie at residues methionine 1–proline 57 and valine 83–glutamate 236. Composition is skewed to basic and acidic residues over residues asparagine 10–asparagine 51 and glutamate 156–glutamate 165. The short motif at lysine 173 to lysine 181 is the Nucleolar localization signal (NLS1) element. Basic and acidic residues predominate over residues threonine 182–glutamate 196. Residues lysine 197–alanine 210 are compositionally biased toward polar residues. The Nucleolar localization signal (NLS2) motif lies at glycine 211–lysine 219. A compositionally biased stretch (basic residues) spans leucine 214–lysine 227.

This sequence belongs to the CUSTOS family. As to quaternary structure, interacts (via NLS1 and NLS2) with dvl2; the interaction is negatively regulated by Wnt stimulation. Interacts with csnk1a1. Interacts with ctnnb1; the interaction is positively regulated by Wnt stimulation. Phosphorylated by ck1/csnk1a1.

Its subcellular location is the nucleus envelope. In terms of biological role, essential for Spemann-Mangold organizer formation and subsequent anterior head development in the embryo. Inhibits canonical Wnt signaling pathway by antagonizing nuclear import of beta-catenin (ctnnb1) during embryogenesis. The sequence is that of Protein CUSTOS from Danio rerio (Zebrafish).